The sequence spans 202 residues: GTP cyclohydrolase-2 (202 aa).

Residue 49-53 (RIHSE) participates in GTP binding. Zn(2+)-binding residues include C54, C65, and C67. GTP-binding positions include Q70, 92–94 (EGR), and T114. D126 acts as the Proton acceptor in catalysis. The active-site Nucleophile is R128. Residues T149 and K154 each contribute to the GTP site.

The protein belongs to the GTP cyclohydrolase II family. The cofactor is Zn(2+).

The catalysed reaction is GTP + 4 H2O = 2,5-diamino-6-hydroxy-4-(5-phosphoribosylamino)-pyrimidine + formate + 2 phosphate + 3 H(+). The protein operates within cofactor biosynthesis; riboflavin biosynthesis; 5-amino-6-(D-ribitylamino)uracil from GTP: step 1/4. Its function is as follows. Catalyzes the conversion of GTP to 2,5-diamino-6-ribosylamino-4(3H)-pyrimidinone 5'-phosphate (DARP), formate and pyrophosphate. The polypeptide is GTP cyclohydrolase-2 (Shewanella frigidimarina (strain NCIMB 400)).